Consider the following 244-residue polypeptide: MSSESKGIPIPRSDSNKTSDVSSWEEDYELISLGSSQDALQRSGIRSAHGDSGYASSPLRMEHLSSSTIIINNQLKKIDVNESIPENSTLHNKYELGAVESSTSSLSLLQSKEEDDSSNWETEDSESAVEEAELPTIFEGKTVISPSSSGTDHSEAVEYTVPTAPPIPDLRFQQSYLQSIQRANGSAFLVALITLRDHVLYPFLSGGMWVFVRHIFQFLKLQEKGFHFGQSLRRNLGLFSTFKD.

Residues 1–24 (MSSESKGIPIPRSDSNKTSDVSSW) are disordered. Topologically, residues 1 to 198 (MSSESKGIPI…LVALITLRDH (198 aa)) are cytoplasmic. An atg8 interacting motif (AIM) motif is present at residues 28–31 (YELI). Positions 105–131 (SLSLLQSKEEDDSSNWETEDSESAVEE) are disordered. A compositionally biased stretch (acidic residues) spans 113–131 (EEDDSSNWETEDSESAVEE). The tract at residues 165 to 184 (PPIPDLRFQQSYLQSIQRAN) is involved in MIM complex binding. Required for normal vegetative cell population growth but is dispensable for mitophagy. The chain crosses the membrane as a helical span at residues 199–215 (VLYPFLSGGMWVFVRHI). Residues 216 to 244 (FQFLKLQEKGFHFGQSLRRNLGLFSTFKD) are Mitochondrial intermembrane-facing.

As to quaternary structure, interacts (via N-terminal atg8 interacting motif) with atg8; the interaction is direct. Interacts with the mitochondrial outer import machinery (MIM) complex subunits mim1 and mim2.

The protein resides in the mitochondrion outer membrane. Functionally, mitophagy receptor that tethers atg8 to the mitochondrial outer membrane to promote selective autophagy. In Schizosaccharomyces pombe (strain 972 / ATCC 24843) (Fission yeast), this protein is Mitophagy receptor atg43.